A 472-amino-acid chain; its full sequence is Transmembrane protein 8B (472 aa).

Over residues 1–10 the composition is skewed to low complexity; it reads MNMPQSLGTQ. The interval 1-24 is disordered; it reads MNMPQSLGTQPLPPEPPSLGTPIE. The Extracellular segment spans residues 1–233; that stretch reads MNMPQSLGTQ…ADALTYGFQL (233 aa). The N-linked (GlcNAc...) asparagine glycan is linked to N100. The EGF-like domain occupies 182-221; sequence FLSPCVDDCGPYGQCKLLRTHNYLYAACECKAGWRGWGCT. Intrachain disulfides connect C186/C196, C190/C209, and C211/C220. The chain crosses the membrane as a helical span at residues 234–254; sequence LSTLLLCLSNLMFLPPVVLAI. Over 255–257 the chain is Cytoplasmic; it reads RSR. Residues 258–277 form a helical membrane-spanning segment; that stretch reads YVLEAAVYTFTMFFSTFYHA. The Extracellular portion of the chain corresponds to 278–292; the sequence is CDQPGIVVFCIMDYD. A helical transmembrane segment spans residues 293–313; that stretch reads VLQFCDFLGSLMSVWVTVIAM. Residues 314-315 lie on the Cytoplasmic side of the membrane; the sequence is AR. A helical transmembrane segment spans residues 316–336; it reads LQPVIKQVLYLLGAMLLSMAL. Residues 337–342 are Extracellular-facing; the sequence is QLDRHG. Residues 343–363 traverse the membrane as a helical segment; sequence LWNLLGPSLFALGILATAWTV. Residues 364-379 are Cytoplasmic-facing; that stretch reads RSVRRRHCYPPTWRRW. The helical transmembrane segment at 380–400 threads the bilayer; that stretch reads LFYLCPGSLIAGSAVLLYAFV. Residues 401–405 are Extracellular-facing; sequence ETRDN. The chain crosses the membrane as a helical span at residues 406–426; sequence YFYIHSIWHMLIAGSVGFLLP. Residues 427–472 lie on the Cytoplasmic side of the membrane; it reads PRAKTDRRVPSGARARGCGYQLCINEQEELGLVGPGGTTVSSICVS.

It belongs to the TMEM8 family. In terms of assembly, may interact with EZR. In terms of processing, N-glycosylated.

Its subcellular location is the cell membrane. It localises to the cytoplasm. It is found in the nucleus. The protein localises to the mitochondrion. The protein resides in the endoplasmic reticulum. Its function is as follows. May function as a regulator of the EGFR pathway. Probable tumor suppressor which may function in cell growth, proliferation and adhesion. This Mus musculus (Mouse) protein is Transmembrane protein 8B (Tmem8b).